We begin with the raw amino-acid sequence, 30 residues long: Photosystem I reaction center subunit XII (30 aa).

Residues 7–29 (VYIALMAALLASVLAIRLGATLY) form a helical membrane-spanning segment.

The protein belongs to the PsaM family.

The protein localises to the plastid. It is found in the chloroplast thylakoid membrane. This Thalassiosira pseudonana (Marine diatom) protein is Photosystem I reaction center subunit XII.